Here is a 726-residue protein sequence, read N- to C-terminus: Catalase-peroxidase (726 aa).

Residues tryptophan 85–tyrosine 208 constitute a cross-link (tryptophyl-tyrosyl-methioninium (Trp-Tyr) (with M-234)). Histidine 86 (proton acceptor) is an active-site residue. Residues tyrosine 208–methionine 234 constitute a cross-link (tryptophyl-tyrosyl-methioninium (Tyr-Met) (with W-85)). Histidine 249 is a heme b binding site.

It belongs to the peroxidase family. Peroxidase/catalase subfamily. In terms of assembly, homodimer or homotetramer. Heme b serves as cofactor. Formation of the three residue Trp-Tyr-Met cross-link is important for the catalase, but not the peroxidase activity of the enzyme.

It carries out the reaction H2O2 + AH2 = A + 2 H2O. The enzyme catalyses 2 H2O2 = O2 + 2 H2O. In terms of biological role, bifunctional enzyme with both catalase and broad-spectrum peroxidase activity. The polypeptide is Catalase-peroxidase (Pseudothermotoga lettingae (strain ATCC BAA-301 / DSM 14385 / NBRC 107922 / TMO) (Thermotoga lettingae)).